The primary structure comprises 276 residues: 2,3,4,5-tetrahydropyridine-2,6-dicarboxylate N-succinyltransferase (276 aa).

The substrate site is built by arginine 104 and aspartate 141.

Belongs to the transferase hexapeptide repeat family. In terms of assembly, homotrimer.

Its subcellular location is the cytoplasm. It catalyses the reaction (S)-2,3,4,5-tetrahydrodipicolinate + succinyl-CoA + H2O = (S)-2-succinylamino-6-oxoheptanedioate + CoA. The protein operates within amino-acid biosynthesis; L-lysine biosynthesis via DAP pathway; LL-2,6-diaminopimelate from (S)-tetrahydrodipicolinate (succinylase route): step 1/3. The protein is 2,3,4,5-tetrahydropyridine-2,6-dicarboxylate N-succinyltransferase of Legionella pneumophila (strain Corby).